The primary structure comprises 550 residues: Chaperonin GroEL (550 aa).

Residues 30-33 (TLGP), Lys-51, 87-91 (DGTTT), Gly-415, 480-482 (NAA), and Asp-496 contribute to the ATP site.

This sequence belongs to the chaperonin (HSP60) family. In terms of assembly, forms a cylinder of 14 subunits composed of two heptameric rings stacked back-to-back. Interacts with the co-chaperonin GroES.

The protein resides in the cytoplasm. The catalysed reaction is ATP + H2O + a folded polypeptide = ADP + phosphate + an unfolded polypeptide.. Functionally, together with its co-chaperonin GroES, plays an essential role in assisting protein folding. The GroEL-GroES system forms a nano-cage that allows encapsulation of the non-native substrate proteins and provides a physical environment optimized to promote and accelerate protein folding. This Variovorax paradoxus (strain S110) protein is Chaperonin GroEL.